The sequence spans 557 residues: MSGSVSRDAEALKSADSSTRRSGGRITFPFMIVTLFGLTLATLGWLQNLIVYLIEEYNMKSIAAAKILNIFSGFTFMFPAIGAIAADSFFGTIPVILVSSFISLVGVVLLALTTLFDSLRPQACETASKLCQAPTNIQLGVLYTAITLGCVGAGGLRFTLATAGANQYEKTKDQGSFFNWFFFTWYLAASISATAIVYAEENISWSFGFGLCVAANLLGLIVFISGKKFYKHDKPLGSPFTSLLRVIFAAIRKRKAVVSTNEKDYHSESKKTPTKSFRFFNRAALKQDDEVNSDGTIHNQWRLCSVQQVEDFKAVIRIIPLVLAILFLSTPIAMQLGLTVLQGLVMDRRLGPHFKIPAGSLQVITLLSTCLFIIVNDRFLYPFYQKLTGKFPTPIQRVGIGHVFNILSMAVTAIVEAKRLKIVQKGHFLGSSSVADMSVLWLFPPLVIVGIGEAFHFPGNVALCYQEFPESMRSTATSITSVLIGICFYTSTALIDLIQKTTAWLPDDINHGRVDNVYWILVIGGVLNLGYFLVCSWFYKYRNLENADHEQDANVSH.

12 consecutive transmembrane segments (helical) span residues 26–46, 67–87, 89–109, 136–156, 177–197, 203–223, 318–338, 356–376, 398–418, 439–459, 478–498, and 518–538; these read ITFP…LGWL, ILNI…IAAD, FFGT…GVVL, NIQL…AGGL, FFNW…TAIV, ISWS…LIVF, IIPL…QLGL, IPAG…IIVN, VGIG…VEAK, VLWL…HFPG, SITS…IDLI, and YWIL…CSWF.

The protein belongs to the major facilitator superfamily. Proton-dependent oligopeptide transporter (POT/PTR) (TC 2.A.17) family. As to expression, expressed in roots.

Its subcellular location is the membrane. Its function is as follows. Transporter involved in a passive nitrate efflux. The chain is Protein NRT1/ PTR FAMILY 2.6 (NPF2.6) from Arabidopsis thaliana (Mouse-ear cress).